We begin with the raw amino-acid sequence, 359 residues long: (2E,6E)-farnesyl diphosphate synthase (359 aa).

The interval 1–21 (MRGTDEKYGLPPQPDSDRMTR) is disordered. Positions 73, 76, and 105 each coordinate isopentenyl diphosphate. Mg(2+) is bound by residues D112 and D116. The short motif at 112–116 (DDLMD) is the DDXXD motif element. R121 provides a ligand contact to (2E)-geranyl diphosphate. R122 lines the isopentenyl diphosphate pocket. K201, T202, and Q239 together coordinate (2E)-geranyl diphosphate. The short motif at 242-246 (DDLLG) is the DDXXD motif element. (2E)-geranyl diphosphate is bound by residues K256 and K266.

The protein belongs to the FPP/GGPP synthase family. Mg(2+) serves as cofactor.

It localises to the cytoplasm. It carries out the reaction isopentenyl diphosphate + (2E)-geranyl diphosphate = (2E,6E)-farnesyl diphosphate + diphosphate. Its pathway is isoprenoid biosynthesis; farnesyl diphosphate biosynthesis; farnesyl diphosphate from geranyl diphosphate and isopentenyl diphosphate. Its function is as follows. Catalyzes the condensation of isopentenyl pyrophosphate (IPP) with geranyl diphosphate (GPP) to yield (2E,6E)-farnesyl diphosphate (E,E-FPP). May be used for squalene and possibly sterol biosynthesis. In Mycobacterium bovis (strain ATCC BAA-935 / AF2122/97), this protein is (2E,6E)-farnesyl diphosphate synthase.